The primary structure comprises 181 residues: Probable chemoreceptor glutamine deamidase CheD (181 aa).

It belongs to the CheD family.

The enzyme catalyses L-glutaminyl-[protein] + H2O = L-glutamyl-[protein] + NH4(+). In terms of biological role, probably deamidates glutamine residues to glutamate on methyl-accepting chemotaxis receptors (MCPs), playing an important role in chemotaxis. The polypeptide is Probable chemoreceptor glutamine deamidase CheD (Agrobacterium fabrum (strain C58 / ATCC 33970) (Agrobacterium tumefaciens (strain C58))).